A 631-amino-acid polypeptide reads, in one-letter code: Interferon-induced GTP-binding protein Mx1 (631 aa).

Residues 33–306 form the Dynamin-type G domain; the sequence is DLALPAIAVI…LTSHICKSLP (274 aa). Residues 43 to 50 form a G1 motif region; the sequence is GDQSSGKS. Position 43 to 50 (43 to 50) interacts with GTP; sequence GDQSSGKS. The G2 motif stretch occupies residues 68–70; the sequence is VTR. Residues 144-147 form a G3 motif region; it reads DLPG. GTP is bound by residues 144–148 and 213–216; these read DLPGI and TKPD. The G4 motif stretch occupies residues 213 to 216; sequence TKPD. The interval 245–248 is G5 motif; that stretch reads KCRG. The bundle signaling element (BSE) stretch occupies residues 307–332; sequence LLEDQINSSHQSASEELQKYGADIPE. A middle domain region spans residues 332–499; the sequence is EDDRTRMSFL…HFQMEQIVYC (168 aa). The stalk stretch occupies residues 333–601; that stretch reads DDRTRMSFLV…TSKCSWFLEE (269 aa). The interval 520 to 522 is critical for lipid-binding; it reads KTK. Residues 543 to 631 form the GED domain; that stretch reads TTEMTQHLKA…ARQKLAKFSD (89 aa).

This sequence belongs to the TRAFAC class dynamin-like GTPase superfamily. Dynamin/Fzo/YdjA family. In terms of assembly, homooligomer. Oligomerizes into multimeric filamentous or ring-like structures by virtue of its stalk domain. Oligomerization is critical for GTPase activity, protein stability, and recognition of viral target structures. Interacts with TRPC1, TRPC3, TRPC4, TRPC5, TRPC6 and TRPC7. Interacts with HSPA5. Interacts with TUBB/TUBB5. Interacts with DDX39A and DDX39B. ISGylated.

It localises to the cytoplasm. The protein localises to the nucleus. It is found in the endoplasmic reticulum membrane. The protein resides in the perinuclear region. Functionally, interferon-induced dynamin-like GTPase with antiviral activity against influenza A virus, (IAV), influenza B virus (IBV) and Thogoto virus (THOV). Inhibits FLUAV by interfering with the process of primary transcription, probably by affecting the viral polymerase function. This is Interferon-induced GTP-binding protein Mx1 (Mx1) from Mus musculus (Mouse).